A 232-amino-acid polypeptide reads, in one-letter code: Phosphatidylserine decarboxylase proenzyme (232 aa).

S190 serves as the catalytic Schiff-base intermediate with substrate; via pyruvic acid. Pyruvic acid (Ser); by autocatalysis is present on S190.

Belongs to the phosphatidylserine decarboxylase family. PSD-A subfamily. Heterodimer of a large membrane-associated beta subunit and a small pyruvoyl-containing alpha subunit. Pyruvate serves as cofactor. Is synthesized initially as an inactive proenzyme. Formation of the active enzyme involves a self-maturation process in which the active site pyruvoyl group is generated from an internal serine residue via an autocatalytic post-translational modification. Two non-identical subunits are generated from the proenzyme in this reaction, and the pyruvate is formed at the N-terminus of the alpha chain, which is derived from the carboxyl end of the proenzyme. The post-translation cleavage follows an unusual pathway, termed non-hydrolytic serinolysis, in which the side chain hydroxyl group of the serine supplies its oxygen atom to form the C-terminus of the beta chain, while the remainder of the serine residue undergoes an oxidative deamination to produce ammonia and the pyruvoyl prosthetic group on the alpha chain.

It is found in the cell membrane. The catalysed reaction is a 1,2-diacyl-sn-glycero-3-phospho-L-serine + H(+) = a 1,2-diacyl-sn-glycero-3-phosphoethanolamine + CO2. It participates in phospholipid metabolism; phosphatidylethanolamine biosynthesis; phosphatidylethanolamine from CDP-diacylglycerol: step 2/2. Its function is as follows. Catalyzes the formation of phosphatidylethanolamine (PtdEtn) from phosphatidylserine (PtdSer). The chain is Phosphatidylserine decarboxylase proenzyme from Bradyrhizobium diazoefficiens (strain JCM 10833 / BCRC 13528 / IAM 13628 / NBRC 14792 / USDA 110).